Reading from the N-terminus, the 495-residue chain is Bifunctional protein GlmU (495 aa).

The pyrophosphorylase stretch occupies residues 1–241; the sequence is MTFPGDTAVL…SALVAGVNNR (241 aa). Residues 12–15, Lys26, Gln83, 88–89, 112–114, Gly151, Glu166, Asn181, and Asn239 each bind UDP-N-acetyl-alpha-D-glucosamine; these read LAAG, GT, and SGD. Asp114 contributes to the Mg(2+) binding site. Position 239 (Asn239) interacts with Mg(2+). The interval 242–262 is linker; sequence VQLAQLASELNRRVVAAHQLA. Positions 263–495 are N-acetyltransferase; sequence GVTVVDPATT…TQPPDADQTP (233 aa). Residues Arg344 and Lys362 each contribute to the UDP-N-acetyl-alpha-D-glucosamine site. His374 serves as the catalytic Proton acceptor. The UDP-N-acetyl-alpha-D-glucosamine site is built by Tyr377 and Asn388. Acetyl-CoA is bound by residues Ala391, 397-398, Ser416, and Ala434; that span reads NY. The segment at 457–495 is disordered; the sequence is IENWVQRKRPGSPAAQASKRASEMACQQPTQPPDADQTP. Residues 483-495 are compositionally biased toward low complexity; that stretch reads QQPTQPPDADQTP.

It in the N-terminal section; belongs to the N-acetylglucosamine-1-phosphate uridyltransferase family. In the C-terminal section; belongs to the transferase hexapeptide repeat family. Homotrimer. The cofactor is Mg(2+).

The protein resides in the cytoplasm. It carries out the reaction alpha-D-glucosamine 1-phosphate + acetyl-CoA = N-acetyl-alpha-D-glucosamine 1-phosphate + CoA + H(+). The catalysed reaction is N-acetyl-alpha-D-glucosamine 1-phosphate + UTP + H(+) = UDP-N-acetyl-alpha-D-glucosamine + diphosphate. It functions in the pathway nucleotide-sugar biosynthesis; UDP-N-acetyl-alpha-D-glucosamine biosynthesis; N-acetyl-alpha-D-glucosamine 1-phosphate from alpha-D-glucosamine 6-phosphate (route II): step 2/2. Its pathway is nucleotide-sugar biosynthesis; UDP-N-acetyl-alpha-D-glucosamine biosynthesis; UDP-N-acetyl-alpha-D-glucosamine from N-acetyl-alpha-D-glucosamine 1-phosphate: step 1/1. It participates in bacterial outer membrane biogenesis; LPS lipid A biosynthesis. Functionally, catalyzes the last two sequential reactions in the de novo biosynthetic pathway for UDP-N-acetylglucosamine (UDP-GlcNAc). The C-terminal domain catalyzes the transfer of acetyl group from acetyl coenzyme A to glucosamine-1-phosphate (GlcN-1-P) to produce N-acetylglucosamine-1-phosphate (GlcNAc-1-P), which is converted into UDP-GlcNAc by the transfer of uridine 5-monophosphate (from uridine 5-triphosphate), a reaction catalyzed by the N-terminal domain. The chain is Bifunctional protein GlmU from Mycobacterium bovis (strain ATCC BAA-935 / AF2122/97).